A 130-amino-acid chain; its full sequence is uncharacterized protein (130 aa).

M1 carries the post-translational modification N-acetylmethionine.

Homotetramer.

This is an uncharacterized protein from Arabidopsis thaliana (Mouse-ear cress).